Here is a 191-residue protein sequence, read N- to C-terminus: MARRKAAPKRETLPDPLFHSELLAKFINAVMRNGKKSVAEKIVYGALDVVAKRVQNKSGEQGDGDGESGGKAGGIKKRSLGDIRTDENARALALETFKGALDKVMPNVEVKSRRVGGSTYQVPVEIRMARRQALARRWLVEYANKRNEKTMVLRLAHEILDAVEGRGGAIKKREDVHRMAKANQAFAHYRW.

Residues 56–80 are disordered; sequence NKSGEQGDGDGESGGKAGGIKKRSL.

This sequence belongs to the universal ribosomal protein uS7 family. As to quaternary structure, part of the 30S ribosomal subunit. Contacts proteins S9 and S11.

In terms of biological role, one of the primary rRNA binding proteins, it binds directly to 16S rRNA where it nucleates assembly of the head domain of the 30S subunit. Is located at the subunit interface close to the decoding center, probably blocks exit of the E-site tRNA. The protein is Small ribosomal subunit protein uS7 of Coxiella burnetii (strain CbuK_Q154) (Coxiella burnetii (strain Q154)).